A 340-amino-acid chain; its full sequence is Guanine nucleotide-binding protein G(I)/G(S)/G(T) subunit beta-1 (340 aa).

WD repeat units lie at residues 53-83 (GHLA…IIWD), 95-125 (LRSS…PIYN), 141-170 (GHTG…ALWD), 182-212 (GHTG…KLWD), 224-254 (GHES…RLFD), 268-298 (NIIC…NVWD), and 310-340 (GHDN…KIWN).

Belongs to the WD repeat G protein beta family. In terms of assembly, g proteins are composed of 3 units, alpha, beta and gamma.

Guanine nucleotide-binding proteins (G proteins) are involved as a modulator or transducer in various transmembrane signaling systems. The beta and gamma chains are required for the GTPase activity, for replacement of GDP by GTP, and for G protein-effector interaction. The chain is Guanine nucleotide-binding protein G(I)/G(S)/G(T) subunit beta-1 (gnb1) from Xenopus laevis (African clawed frog).